We begin with the raw amino-acid sequence, 224 residues long: Phosphoribosyltransferase domain-containing protein 1 (224 aa).

The Mg(2+) site is built by Glu140 and Asp141. GMP contacts are provided by residues 140-148 (EDIINTGRT), Lys172, 193-194 (FV), and Asp200. Position 200 (Asp200) interacts with Mg(2+).

Belongs to the purine/pyrimidine phosphoribosyltransferase family.

The chain is Phosphoribosyltransferase domain-containing protein 1 (prtfdc1) from Xenopus laevis (African clawed frog).